The primary structure comprises 138 residues: Large ribosomal subunit protein uL16 (138 aa).

The protein belongs to the universal ribosomal protein uL16 family. Part of the 50S ribosomal subunit.

Binds 23S rRNA and is also seen to make contacts with the A and possibly P site tRNAs. The polypeptide is Large ribosomal subunit protein uL16 (Gluconobacter oxydans (strain 621H) (Gluconobacter suboxydans)).